The following is a 308-amino-acid chain: Cytochrome b (308 aa).

Transmembrane regions (helical) follow at residues 1–21, 45–66, 81–101, and 146–166; these read FGSL…LLAT, WLIR…YIHI, WNVG…GYVL, and FFAL…VHLT. Positions 51 and 65 each coordinate heme b. Positions 150 and 164 each coordinate heme b. Histidine 169 lines the a ubiquinone pocket. 3 helical membrane passes run 194 to 214, 256 to 276, and 288 to 308; these read MKDI…ALFS, LGGV…PLLH, and LSQI…WVGS.

The protein belongs to the cytochrome b family. The cytochrome bc1 complex contains 11 subunits: 3 respiratory subunits (MT-CYB, CYC1 and UQCRFS1), 2 core proteins (UQCRC1 and UQCRC2) and 6 low-molecular weight proteins (UQCRH/QCR6, UQCRB/QCR7, UQCRQ/QCR8, UQCR10/QCR9, UQCR11/QCR10 and a cleavage product of UQCRFS1). This cytochrome bc1 complex then forms a dimer. Heme b serves as cofactor.

The protein localises to the mitochondrion inner membrane. Component of the ubiquinol-cytochrome c reductase complex (complex III or cytochrome b-c1 complex) that is part of the mitochondrial respiratory chain. The b-c1 complex mediates electron transfer from ubiquinol to cytochrome c. Contributes to the generation of a proton gradient across the mitochondrial membrane that is then used for ATP synthesis. This is Cytochrome b (MT-CYB) from Ptiloprora plumbea (Leaden honeyeater).